Consider the following 161-residue polypeptide: Xanthine-guanine phosphoribosyltransferase (161 aa).

Residues Arg41–Gly42 and Asp95–Thr103 each bind 5-phospho-alpha-D-ribose 1-diphosphate. Asp96 is a Mg(2+) binding site. Guanine-binding residues include Asp99 and Ile142. The xanthine site is built by Asp99 and Ile142. GMP contacts are provided by residues Asp99–Thr103 and Trp141–Ile142.

The protein belongs to the purine/pyrimidine phosphoribosyltransferase family. XGPT subfamily. Homotetramer. Mg(2+) is required as a cofactor.

It is found in the cell inner membrane. It carries out the reaction GMP + diphosphate = guanine + 5-phospho-alpha-D-ribose 1-diphosphate. It catalyses the reaction XMP + diphosphate = xanthine + 5-phospho-alpha-D-ribose 1-diphosphate. The enzyme catalyses IMP + diphosphate = hypoxanthine + 5-phospho-alpha-D-ribose 1-diphosphate. It participates in purine metabolism; GMP biosynthesis via salvage pathway; GMP from guanine: step 1/1. The protein operates within purine metabolism; XMP biosynthesis via salvage pathway; XMP from xanthine: step 1/1. Its function is as follows. Purine salvage pathway enzyme that catalyzes the transfer of the ribosyl-5-phosphate group from 5-phospho-alpha-D-ribose 1-diphosphate (PRPP) to the N9 position of the 6-oxopurines guanine and xanthine to form the corresponding ribonucleotides GMP (guanosine 5'-monophosphate) and XMP (xanthosine 5'-monophosphate), with the release of PPi. To a lesser extent, also acts on hypoxanthine. The chain is Xanthine-guanine phosphoribosyltransferase from Idiomarina loihiensis (strain ATCC BAA-735 / DSM 15497 / L2-TR).